A 66-amino-acid chain; its full sequence is Large ribosomal subunit protein bL31 (66 aa).

The Zn(2+) site is built by C16, C18, C36, and C39.

The protein belongs to the bacterial ribosomal protein bL31 family. Type A subfamily. In terms of assembly, part of the 50S ribosomal subunit. The cofactor is Zn(2+).

Its function is as follows. Binds the 23S rRNA. In Sulfurovum sp. (strain NBC37-1), this protein is Large ribosomal subunit protein bL31.